The following is a 347-amino-acid chain: Fatty acid elongase 2 (347 aa).

Over Met1–Glu62 the chain is Lumenal. N-linked (GlcNAc...) asparagine glycosylation occurs at Asn32. The chain crosses the membrane as a helical span at residues Leu63–Phe83. At Gly84 to Lys96 the chain is on the cytoplasmic side. Residues Leu97–Met119 form a helical membrane-spanning segment. The Lumenal portion of the chain corresponds to Val120–Gln122. Residues Leu123–Trp142 form a helical membrane-spanning segment. The Cytoplasmic portion of the chain corresponds to Thr143–Leu146. The helical transmembrane segment at Val147–Leu169 threads the bilayer. Over Lys170 to Ser200 the chain is Lumenal. Residues His178–His182 carry the HxxHH motif motif. A helical membrane pass occupies residues Trp201–Ala221. Residues Ala222–Glu231 lie on the Cytoplasmic side of the membrane. A helical transmembrane segment spans residues Trp232–Gln254. At Lys255–Thr275 the chain is on the lumenal side. Residues Ala276–Ile296 traverse the membrane as a helical segment. The Cytoplasmic segment spans residues Asn297–Arg347. Thr334 bears the Phosphothreonine mark. Phosphoserine occurs at positions 336 and 338. A Di-lysine-like motif motif is present at residues Arg344–Arg347.

This sequence belongs to the ELO family.

The protein localises to the endoplasmic reticulum membrane. The enzyme catalyses a very-long-chain acyl-CoA + malonyl-CoA + H(+) = a very-long-chain 3-oxoacyl-CoA + CO2 + CoA. It carries out the reaction octadecanoyl-CoA + malonyl-CoA + H(+) = 3-oxoeicosanoyl-CoA + CO2 + CoA. It catalyses the reaction hexadecanoyl-CoA + malonyl-CoA + H(+) = 3-oxooctadecanoyl-CoA + CO2 + CoA. The catalysed reaction is eicosanoyl-CoA + malonyl-CoA + H(+) = 3-oxodocosanoyl-CoA + CO2 + CoA. The enzyme catalyses docosanoyl-CoA + malonyl-CoA + H(+) = 3-oxotetracosanoyl-CoA + CO2 + CoA. Its function is as follows. Component of a microsomal membrane-bound long-chain fatty acid elongation system, which produces the 20-26-carbon very long-chain fatty acids (VLCFA) from long-chain fatty acid precursors and is involved ceramide and inositol sphingolipid biosynthesis. Component of elongase II, which elongates 16-18 carbon fatty acyl-CoAs such as palmitoyl-CoA and stearoyl-CoA to 20-22-carbon fatty acids by incorporation of malonyl-CoA. Involved in the synthesis of 1,3-beta-glucan. The enzymes active site faces the cytosol, whereas VLCFA length is determined by a lysine near the luminal end of transmembrane helix 6. Plays an important role in lipotoxic cell death induced by oleic acid through maintaining a balanced fatty acid composition in thr plasma membrane. This chain is Fatty acid elongase 2, found in Saccharomyces cerevisiae (strain ATCC 204508 / S288c) (Baker's yeast).